An 85-amino-acid chain; its full sequence is Coiled-coil-helix-coiled-coil-helix domain-containing protein 7 (85 aa).

In terms of domain architecture, CHCH spans 13-55 (SNPCLEETDASTKCMDDNRYEKDLCTPYFVKYKNCRKFWNGIM). 2 short sequence motifs (cx9C motif) span residues 16–26 (CLEETDASTKC) and 37–47 (CTPYFVKYKNC). Cystine bridges form between Cys16–Cys47 and Cys26–Cys37.

Belongs to the CHCHD7 family.

Its subcellular location is the mitochondrion intermembrane space. The polypeptide is Coiled-coil-helix-coiled-coil-helix domain-containing protein 7 (chchd7) (Xenopus tropicalis (Western clawed frog)).